We begin with the raw amino-acid sequence, 539 residues long: uncharacterized protein (539 aa).

Disordered regions lie at residues 179–203 (SDEL…HSHG) and 433–459 (AQAS…HRDE). The span at 182–192 (LLPDTGEDSDE) shows a compositional bias: acidic residues. The span at 433–442 (AQASARAQAR) shows a compositional bias: low complexity. Basic residues predominate over residues 443–455 (AARRGRSAAKARG).

It belongs to the mycobacterial PPE family.

The protein resides in the secreted. This is an uncharacterized protein from Mycobacterium tuberculosis (strain CDC 1551 / Oshkosh).